The chain runs to 426 residues: Bifunctional protein GlmU (426 aa).

The pyrophosphorylase stretch occupies residues 1–216 (MSEVDVVILA…WHDILGVNTQ (216 aa)). Residues 9–12 (LAAG), Lys-23, and Gln-69 contribute to the UDP-N-acetyl-alpha-D-glucosamine site. Mg(2+) is bound at residue Asp-97. 4 residues coordinate UDP-N-acetyl-alpha-D-glucosamine: Gly-132, Glu-148, Asn-163, and Asn-214. Residue Asn-214 coordinates Mg(2+). The tract at residues 217-237 (QQLAAVSKIARKRINDQIMAN) is linker. The N-acetyltransferase stretch occupies residues 238-426 (GVTMIDPLTT…AKHDQRDDQP (189 aa)). Positions 286 and 304 each coordinate UDP-N-acetyl-alpha-D-glucosamine. The active-site Proton acceptor is His-316. Residues Tyr-319 and Asn-330 each contribute to the UDP-N-acetyl-alpha-D-glucosamine site. Residues Ala-333, 339–340 (NY), Ser-358, Ala-376, and Arg-393 contribute to the acetyl-CoA site.

It in the N-terminal section; belongs to the N-acetylglucosamine-1-phosphate uridyltransferase family. In the C-terminal section; belongs to the transferase hexapeptide repeat family. As to quaternary structure, homotrimer. Mg(2+) is required as a cofactor.

The protein localises to the cytoplasm. The catalysed reaction is alpha-D-glucosamine 1-phosphate + acetyl-CoA = N-acetyl-alpha-D-glucosamine 1-phosphate + CoA + H(+). It catalyses the reaction N-acetyl-alpha-D-glucosamine 1-phosphate + UTP + H(+) = UDP-N-acetyl-alpha-D-glucosamine + diphosphate. It functions in the pathway nucleotide-sugar biosynthesis; UDP-N-acetyl-alpha-D-glucosamine biosynthesis; N-acetyl-alpha-D-glucosamine 1-phosphate from alpha-D-glucosamine 6-phosphate (route II): step 2/2. The protein operates within nucleotide-sugar biosynthesis; UDP-N-acetyl-alpha-D-glucosamine biosynthesis; UDP-N-acetyl-alpha-D-glucosamine from N-acetyl-alpha-D-glucosamine 1-phosphate: step 1/1. Its pathway is bacterial outer membrane biogenesis; LPS lipid A biosynthesis. Functionally, catalyzes the last two sequential reactions in the de novo biosynthetic pathway for UDP-N-acetylglucosamine (UDP-GlcNAc). The C-terminal domain catalyzes the transfer of acetyl group from acetyl coenzyme A to glucosamine-1-phosphate (GlcN-1-P) to produce N-acetylglucosamine-1-phosphate (GlcNAc-1-P), which is converted into UDP-GlcNAc by the transfer of uridine 5-monophosphate (from uridine 5-triphosphate), a reaction catalyzed by the N-terminal domain. This is Bifunctional protein GlmU from Oenococcus oeni (strain ATCC BAA-331 / PSU-1).